A 200-amino-acid polypeptide reads, in one-letter code: TATA-box-binding protein 1 (200 aa).

Residue threonine 2 is modified to N-acetylthreonine. Tandem repeats lie at residues 25-101 (LQNI…ARIV) and 115-192 (IQNI…YPVL).

This sequence belongs to the TBP family. In terms of assembly, belongs to the TFIID complex together with the TBP-associated factors (TAFs). Binds DNA as monomer. Interacts with TAF1 (via N-terminus). Interacts with MEE12/CCG1. Associates with PWP2 in the nucleus. Component of a nuclear protein complex containing at least TATA binding proteins (TBPs, e.g. TBP1 and TBP2) and ATX1.

The protein resides in the nucleus. In terms of biological role, general transcription factor that functions at the core of the DNA-binding multiprotein factor TFIID. Binding of TFIID to the TATA box is the initial transcriptional step of the pre-initiation complex (PIC), playing a role in the activation of eukaryotic genes transcribed by RNA polymerase II. In Arabidopsis thaliana (Mouse-ear cress), this protein is TATA-box-binding protein 1.